Reading from the N-terminus, the 324-residue chain is Coproporphyrin III ferrochelatase (324 aa).

Positions 184 and 266 each coordinate Fe(2+).

Belongs to the ferrochelatase family.

It localises to the cytoplasm. The enzyme catalyses Fe-coproporphyrin III + 2 H(+) = coproporphyrin III + Fe(2+). Its pathway is porphyrin-containing compound metabolism; protoheme biosynthesis. In terms of biological role, involved in coproporphyrin-dependent heme b biosynthesis. Catalyzes the insertion of ferrous iron into coproporphyrin III to form Fe-coproporphyrin III. The protein is Coproporphyrin III ferrochelatase of Lactiplantibacillus plantarum (strain ATCC BAA-793 / NCIMB 8826 / WCFS1) (Lactobacillus plantarum).